The primary structure comprises 92 residues: N(2)-fixation sustaining protein CowN (92 aa).

It belongs to the CowN family.

Is required to sustain N(2)-dependent growth in the presence of low levels of carbon monoxide (CO). Probably acts by protecting the N(2) fixation ability of the nitrogenase complex, which is inactivated in the presence of CO. The protein is N(2)-fixation sustaining protein CowN of Rhodopseudomonas palustris (strain HaA2).